Consider the following 285-residue polypeptide: Release factor glutamine methyltransferase (285 aa).

S-adenosyl-L-methionine contacts are provided by residues 119–123 (GTGSG), Glu-142, Trp-175, and Asn-191. 191–194 (NPPY) contributes to the substrate binding site.

It belongs to the protein N5-glutamine methyltransferase family. PrmC subfamily.

It catalyses the reaction L-glutaminyl-[peptide chain release factor] + S-adenosyl-L-methionine = N(5)-methyl-L-glutaminyl-[peptide chain release factor] + S-adenosyl-L-homocysteine + H(+). Functionally, methylates the class 1 translation termination release factors RF1/PrfA and RF2/PrfB on the glutamine residue of the universally conserved GGQ motif. The chain is Release factor glutamine methyltransferase from Burkholderia pseudomallei (strain K96243).